The chain runs to 247 residues: ATP synthase subunit a, chloroplastic (247 aa).

Helical transmembrane passes span 38 to 58 (QVLI…TIAV), 95 to 115 (VPFI…GALL), 134 to 154 (INTT…AGLT), 199 to 219 (LVVV…VMLL), and 220 to 240 (GLFT…AYIG).

This sequence belongs to the ATPase A chain family. In terms of assembly, F-type ATPases have 2 components, CF(1) - the catalytic core - and CF(0) - the membrane proton channel. CF(1) has five subunits: alpha(3), beta(3), gamma(1), delta(1), epsilon(1). CF(0) has four main subunits: a, b, b' and c.

It localises to the plastid. Its subcellular location is the chloroplast thylakoid membrane. In terms of biological role, key component of the proton channel; it plays a direct role in the translocation of protons across the membrane. The protein is ATP synthase subunit a, chloroplastic of Solanum lycopersicum (Tomato).